The following is a 190-amino-acid chain: Holliday junction branch migration complex subunit RuvA (190 aa).

The tract at residues 1-64 (MIGRITGTLI…EDAHLLYGFG (64 aa)) is domain I. The domain II stretch occupies residues 65–137 (TASERAAFRE…MRGKLGADIG (73 aa)). The interval 137-141 (GATPH) is flexible linker. The tract at residues 142–190 (AVPDSQSDILNALLALGYSEKESLAALKTLPEGLGVSDGIRQALKALAR) is domain III.

The protein belongs to the RuvA family. Homotetramer. Forms an RuvA(8)-RuvB(12)-Holliday junction (HJ) complex. HJ DNA is sandwiched between 2 RuvA tetramers; dsDNA enters through RuvA and exits via RuvB. An RuvB hexamer assembles on each DNA strand where it exits the tetramer. Each RuvB hexamer is contacted by two RuvA subunits (via domain III) on 2 adjacent RuvB subunits; this complex drives branch migration. In the full resolvosome a probable DNA-RuvA(4)-RuvB(12)-RuvC(2) complex forms which resolves the HJ.

It is found in the cytoplasm. In terms of biological role, the RuvA-RuvB-RuvC complex processes Holliday junction (HJ) DNA during genetic recombination and DNA repair, while the RuvA-RuvB complex plays an important role in the rescue of blocked DNA replication forks via replication fork reversal (RFR). RuvA specifically binds to HJ cruciform DNA, conferring on it an open structure. The RuvB hexamer acts as an ATP-dependent pump, pulling dsDNA into and through the RuvAB complex. HJ branch migration allows RuvC to scan DNA until it finds its consensus sequence, where it cleaves and resolves the cruciform DNA. In Bordetella avium (strain 197N), this protein is Holliday junction branch migration complex subunit RuvA.